A 575-amino-acid polypeptide reads, in one-letter code: Lysine--tRNA ligase (575 aa).

Mg(2+) is bound by residues glutamate 412 and glutamate 419.

It belongs to the class-II aminoacyl-tRNA synthetase family. As to quaternary structure, homodimer. It depends on Mg(2+) as a cofactor.

It is found in the cytoplasm. The enzyme catalyses tRNA(Lys) + L-lysine + ATP = L-lysyl-tRNA(Lys) + AMP + diphosphate. In Bacteroides fragilis (strain YCH46), this protein is Lysine--tRNA ligase.